Consider the following 122-residue polypeptide: Small ribosomal subunit protein uS13 (122 aa).

Positions 97–122 (PCRGQRTKTNARTRKGPARTVAGKKK) are disordered.

This sequence belongs to the universal ribosomal protein uS13 family. As to quaternary structure, part of the 30S ribosomal subunit. Forms a loose heterodimer with protein S19. Forms two bridges to the 50S subunit in the 70S ribosome.

Its function is as follows. Located at the top of the head of the 30S subunit, it contacts several helices of the 16S rRNA. In the 70S ribosome it contacts the 23S rRNA (bridge B1a) and protein L5 of the 50S subunit (bridge B1b), connecting the 2 subunits; these bridges are implicated in subunit movement. Contacts the tRNAs in the A and P-sites. In Geobacter sp. (strain M21), this protein is Small ribosomal subunit protein uS13.